The chain runs to 267 residues: Thiazole synthase (267 aa).

Catalysis depends on K107, which acts as the Schiff-base intermediate with DXP. Residues G168, 194-195 (AG), and 216-217 (NT) contribute to the 1-deoxy-D-xylulose 5-phosphate site.

This sequence belongs to the ThiG family. Homotetramer. Forms heterodimers with either ThiH or ThiS.

It localises to the cytoplasm. It carries out the reaction [ThiS sulfur-carrier protein]-C-terminal-Gly-aminoethanethioate + 2-iminoacetate + 1-deoxy-D-xylulose 5-phosphate = [ThiS sulfur-carrier protein]-C-terminal Gly-Gly + 2-[(2R,5Z)-2-carboxy-4-methylthiazol-5(2H)-ylidene]ethyl phosphate + 2 H2O + H(+). It functions in the pathway cofactor biosynthesis; thiamine diphosphate biosynthesis. Its function is as follows. Catalyzes the rearrangement of 1-deoxy-D-xylulose 5-phosphate (DXP) to produce the thiazole phosphate moiety of thiamine. Sulfur is provided by the thiocarboxylate moiety of the carrier protein ThiS. In vitro, sulfur can be provided by H(2)S. The polypeptide is Thiazole synthase (Aquifex aeolicus (strain VF5)).